The sequence spans 91 residues: MISIDLALKYTPLPISVQRKEVEDAQTLYNQIVNAMKSGTSQLIELTCEKQTEKKVAVMSDQISAVILSQKDGGAAAGRVPGFFSMVESEQ.

The protein belongs to the UPF0367 family.

In Crocosphaera subtropica (strain ATCC 51142 / BH68) (Cyanothece sp. (strain ATCC 51142)), this protein is UPF0367 protein cce_2199.